We begin with the raw amino-acid sequence, 345 residues long: Methylthioribose-1-phosphate isomerase (345 aa).

Substrate is bound by residues 44-46, arginine 86, and glutamine 194; that span reads RGA. Catalysis depends on aspartate 235, which acts as the Proton donor. 245-246 lines the substrate pocket; sequence NK.

It belongs to the eIF-2B alpha/beta/delta subunits family. MtnA subfamily.

It catalyses the reaction 5-(methylsulfanyl)-alpha-D-ribose 1-phosphate = 5-(methylsulfanyl)-D-ribulose 1-phosphate. It functions in the pathway amino-acid biosynthesis; L-methionine biosynthesis via salvage pathway; L-methionine from S-methyl-5-thio-alpha-D-ribose 1-phosphate: step 1/6. Functionally, catalyzes the interconversion of methylthioribose-1-phosphate (MTR-1-P) into methylthioribulose-1-phosphate (MTRu-1-P). The polypeptide is Methylthioribose-1-phosphate isomerase (Desulfitobacterium hafniense (strain DSM 10664 / DCB-2)).